A 271-amino-acid polypeptide reads, in one-letter code: DNA repair protein RecO (271 aa).

Residues alanine 248–alanine 271 form a disordered region. Positions aspartate 253–threonine 264 are enriched in basic and acidic residues.

The protein belongs to the RecO family.

Its function is as follows. Involved in DNA repair and RecF pathway recombination. This is DNA repair protein RecO from Rhodococcus opacus (strain B4).